The primary structure comprises 145 residues: Large ribosomal subunit protein bL19 (145 aa).

Basic and acidic residues predominate over residues 112-130 (GKSARIKERRPAKAVEKTS). The segment at 112–145 (GKSARIKERRPAKAVEKTSKPASAKKPAAKANKK) is disordered.

The protein belongs to the bacterial ribosomal protein bL19 family.

Its function is as follows. This protein is located at the 30S-50S ribosomal subunit interface and may play a role in the structure and function of the aminoacyl-tRNA binding site. The sequence is that of Large ribosomal subunit protein bL19 from Malacoplasma penetrans (strain HF-2) (Mycoplasma penetrans).